The chain runs to 176 residues: 3-hydroxydecanoyl-[acyl-carrier-protein] dehydratase (176 aa).

The active site involves His-75.

The protein belongs to the thioester dehydratase family. FabA subfamily. As to quaternary structure, homodimer.

The protein resides in the cytoplasm. It catalyses the reaction a (3R)-hydroxyacyl-[ACP] = a (2E)-enoyl-[ACP] + H2O. The enzyme catalyses (3R)-hydroxydecanoyl-[ACP] = (2E)-decenoyl-[ACP] + H2O. It carries out the reaction (2E)-decenoyl-[ACP] = (3Z)-decenoyl-[ACP]. The protein operates within lipid metabolism; fatty acid biosynthesis. Its function is as follows. Necessary for the introduction of cis unsaturation into fatty acids. Catalyzes the dehydration of (3R)-3-hydroxydecanoyl-ACP to E-(2)-decenoyl-ACP and then its isomerization to Z-(3)-decenoyl-ACP. Can catalyze the dehydratase reaction for beta-hydroxyacyl-ACPs with saturated chain lengths up to 16:0, being most active on intermediate chain length. The sequence is that of 3-hydroxydecanoyl-[acyl-carrier-protein] dehydratase from Actinobacillus pleuropneumoniae serotype 5b (strain L20).